Here is a 328-residue protein sequence, read N- to C-terminus: Cytochrome c biogenesis protein CcsA (328 aa).

The next 8 membrane-spanning stretches (helical) occupy residues 12–32 (HISFSVVSLLISIHLITLLLG), 45–65 (GMIITFFCITGLLVTRWIFSG), 72–92 (LYESLIFLSWTFSIFYMVLCL), 100–120 (FNTIITPSILFTQGFATSGLL), 145–165 (MILGYTTLLCGSLLSVAILVI), 234–254 (TISLGFIFLTVGNISGAVWAN), 263–283 (WDPKETWAFITWIIFAIYLHI), and 296–316 (IVASMGFLIIWICYLGINLLG).

Belongs to the CcmF/CycK/Ccl1/NrfE/CcsA family. In terms of assembly, may interact with Ccs1.

The protein localises to the plastid. It is found in the chloroplast thylakoid membrane. Its function is as follows. Required during biogenesis of c-type cytochromes (cytochrome c6 and cytochrome f) at the step of heme attachment. The polypeptide is Cytochrome c biogenesis protein CcsA (Phaseolus vulgaris (Kidney bean)).